The primary structure comprises 102 residues: NADH-quinone oxidoreductase subunit K (102 aa).

3 helical membrane-spanning segments follow: residues 6–26 (LIGI…GVLA), 30–50 (MLFQ…GFIA), and 63–83 (MFIL…ALFL).

It belongs to the complex I subunit 4L family. NDH-1 is composed of 14 different subunits. Subunits NuoA, H, J, K, L, M, N constitute the membrane sector of the complex.

The protein localises to the cell inner membrane. It catalyses the reaction a quinone + NADH + 5 H(+)(in) = a quinol + NAD(+) + 4 H(+)(out). In terms of biological role, NDH-1 shuttles electrons from NADH, via FMN and iron-sulfur (Fe-S) centers, to quinones in the respiratory chain. The immediate electron acceptor for the enzyme in this species is believed to be ubiquinone. Couples the redox reaction to proton translocation (for every two electrons transferred, four hydrogen ions are translocated across the cytoplasmic membrane), and thus conserves the redox energy in a proton gradient. The protein is NADH-quinone oxidoreductase subunit K of Rhodopseudomonas palustris (strain TIE-1).